The primary structure comprises 86 residues: Small ribosomal subunit protein uS15 (86 aa).

This sequence belongs to the universal ribosomal protein uS15 family. Part of the 30S ribosomal subunit. Forms a bridge to the 50S subunit in the 70S ribosome, contacting the 23S rRNA.

In terms of biological role, one of the primary rRNA binding proteins, it binds directly to 16S rRNA where it helps nucleate assembly of the platform of the 30S subunit by binding and bridging several RNA helices of the 16S rRNA. Its function is as follows. Forms an intersubunit bridge (bridge B4) with the 23S rRNA of the 50S subunit in the ribosome. In Neorickettsia sennetsu (strain ATCC VR-367 / Miyayama) (Ehrlichia sennetsu), this protein is Small ribosomal subunit protein uS15.